Here is a 2442-residue protein sequence, read N- to C-terminus: Histone lysine acetyltransferase CREBBP (2442 aa).

Disordered stretches follow at residues 1–40 (MAEN…ENDL) and 74–168 (RGGS…PATS). A2 is subject to N-acetylalanine. A compositionally biased stretch (polar residues) spans 20-30 (PGFSANDSTDF). Position 120 is a phosphoserine (S120). A compositionally biased stretch (polar residues) spans 125–168 (GDSSTPSLPKQAASTSGPTPPASQALNPQAQKQVGLVTSSPATS). R219 is subject to Omega-N-methylarginine. Residues 226–409 (PAPAMQGATS…GKACQVAHCA (184 aa)) are interaction with SRCAP. Residues 261–272 (GGMTKMGMTGNT) are compositionally biased toward low complexity. The segment at 261 to 290 (GGMTKMGMTGNTSPFGQPFSQTGGQPMGAT) is disordered. Over residues 273-284 (SPFGQPFSQTGG) the composition is skewed to polar residues. Residues 346 to 432 (DPEKRKLIQQ…RHDCPVCLPL (87 aa)) form a TAZ-type 1 zinc finger. Zn(2+) is bound by residues H362, C366, C379, C384, H393, C397, C403, C408, H417, C421, C426, and C429. Residues 586–665 (GVRKGWHEHV…KIYKIQKELE (80 aa)) form the KIX domain. Asymmetric dimethylarginine is present on residues R600 and R624. Position 656 is an N6-acetyllysine (K656). Polar residues predominate over residues 792–825 (FLPQNQFPSSSGAMSVNSVGMGQPATQAGVSQGQ). The disordered stretch occupies residues 792 to 1084 (FLPQNQFPSS…STSPSQPRKK (293 aa)). Composition is skewed to pro residues over residues 846–862 (PCPP…PPPA) and 874–887 (PTPP…PAAP). Polar residues predominate over residues 894 to 906 (VSSGQTPTPTPGS). Composition is skewed to low complexity over residues 909 to 930 (SAAQ…VTPQ) and 938 to 957 (PSVA…HTQP). Residues 974-989 (PTPSSVTSAETSSQQP) show a composition bias toward polar residues. K999 participates in a covalent cross-link: Glycyl lysine isopeptide (Lys-Gly) (interchain with G-Cter in SUMO1). A compositionally biased stretch (basic and acidic residues) spans 1012-1022 (AESKGEPRSEM). Residue K1015 is modified to N6-acetyllysine. S1031 is modified (phosphoserine). The segment covering 1033-1060 (VKEETDTTEQKSEPMEVEEKKPEVKVEA) has biased composition (basic and acidic residues). Glycyl lysine isopeptide (Lys-Gly) (interchain with G-Cter in SUMO1) cross-links involve residues K1034 and K1057. Positions 1067-1080 (SANGTASQSTSPSQ) are enriched in polar residues. Position 1077 is a phosphoserine (S1077). The Bromo domain occupies 1086 to 1193 (FKPEELRQAL…EVFEQEIDPV (108 aa)). Positions 1125–1171 (DYFDIVKNPMDLSTIKRKLDTGQYQEPWQYVDDVWLMFNNAWLYNRK) are interaction with histone. An interaction with ASF1A region spans residues 1163–1181 (NNAWLYNRKTSRVYKFCSK). K1217 is modified (N6-acetyllysine). Residues 1324-1701 (KFSAKRLQTT…MLVELHTQGQ (378 aa)) form the CBP/p300-type HAT domain. Phosphoserine; by IKKA occurs at positions 1383 and 1387. The segment at 1434-1436 (YLD) is interaction with histone. Acetyl-CoA contacts are provided by residues 1435 to 1437 (LDS), 1447 to 1448 (RT), I1494, R1499, and W1503. Positions 1548–1575 (NVLEESIKELEQEEEERKKEESTAASET) form a coiled coil. The segment covering 1557 to 1569 (LEQEEEERKKEES) has biased composition (basic and acidic residues). The disordered stretch occupies residues 1557–1616 (LEQEEEERKKEESTAASETPEGSQGDSKNAKKKNNKKTNKNKSSISRANKKKPSMPNVSN). Residues K1584, K1592, K1593, K1596, and K1598 each carry the N6-acetyllysine modification. Residues 1586–1596 (AKKKNNKKTNK) are compositionally biased toward basic residues. The ZZ-type zinc-finger motif lies at 1703 to 1751 (RFVYTCNECKHHVETRWHCTVCEDYDLCINCYNTKSHTHKMVKWGLGLD). Zn(2+) is bound by residues C1708, C1711, C1721, C1724, C1730, C1733, H1739, and H1741. 2 positions are modified to N6-acetyllysine: K1742 and K1745. At S1764 the chain carries Phosphoserine. The segment at 1766–1847 (QESRRLSIQR…KCPVPFCLNI (82 aa)) adopts a TAZ-type 2 zinc-finger fold. Positions 1875–1960 (TRNVPQQSLP…QPPPAAVEAA (86 aa)) are disordered. 2 stretches are compositionally biased toward pro residues: residues 1901–1913 (PQTP…PQPS) and 1944–1955 (PAPPPPAQPPPA). Phosphoserine occurs at positions 2064, 2077, and 2080. Residues 2112–2421 (NQPGMQPQPG…LNTPNRSALS (310 aa)) are disordered. 4 stretches are compositionally biased toward low complexity: residues 2113-2138 (QPGM…HQQP), 2197-2217 (QLLQ…QQQQ), 2261-2280 (MGQM…PGLG), and 2287-2305 (IQQA…KQQI). Composition is skewed to polar residues over residues 2315-2327 (SPQQ…QPQA) and 2334-2343 (QIATSLSNQV). The segment covering 2349–2372 (VQSPRPQSQPPHSSPSPRIQPQPS) has biased composition (pro residues). Position 2351 is a phosphoserine (S2351). The segment covering 2411–2421 (QLNTPNRSALS) has biased composition (polar residues).

In terms of assembly, part of a complex composed of MSX3, CREBBP/CBP AND EP300/p300; the interaction with MSX3 decreases histone acetylation activity. Found in a complex containing NCOA2; NCOA3; IKKA; IKKB and IKBKG. Probably part of a complex with HIF1A and EP300. Interacts with phosphorylated CREB1. Interacts with the C-terminal region of CITED4. The TAZ-type 1 domain interacts with HIF1A. Interacts with SRCAP, CARM1, ELF3, MLLT7/FOXO4, N4BP2, NCOA1, NCOA3, NCOA6, PCAF, DDX5, DDX17, PELP1, PML, SMAD1, SMAD2, SMAD3, SPIB, TRERF1 and ZCCHC12. Interacts with KLF1; the interaction results in acetylation and enhancement of transcriptional activity of KLF1. Interacts with DAXX; the interaction is dependent on CBP sumoylation and results in suppression of the transcriptional activity via recruitment of HDAC2 to DAXX. Interacts with MAF. Interacts with MTDH. Interacts with MAFG; the interaction acetylates MAFG in the basic region and stimulates NFE2 transcriptional activity through increasing its DNA-binding activity. Interacts with IRF2; the interaction acetylates IRF2 and regulates its activity on the H4 promoter. Interacts (via N-terminus) with SS18L1/CREST (via C-terminus). Interacts with IRF3 (when phosphorylated); forming the dsRNA-activated factor 1 (DRAF1), a complex which activates the transcription of the type I interferon genes. Interacts with MECOM. Interacts with CITED1 (via C-terminus) Interacts with GATA1; the interaction results in acetylation and enhancement of transcriptional activity of GATA1. Interacts with FOXO1; the interaction acetylates FOXO1 and inhibits its transcriptional activity. Interacts with NPAS2, CLOCK and BMAL1. Interacts with ASF1A and ASF1B; this promotes histone acetylation. Interacts with acetylated TP53/p53 and with the acetylated histones H3 and H4. Interacts (via transactivation domain and C-terminus) with PCNA; the interaction occurs on chromatin in UV-irradiated damaged cells. Interacts with DHX9 (via N-terminus); this interaction mediates association with RNA polymerase II holoenzyme and stimulates CREB-dependent transcriptional activation. Interacts with SMAD4; negatively regulated by ZBTB7A. Forms a complex with KMT2A and CREB1. Interacts with DDX3X; this interaction may facilitate HNF4A acetylation. Interacts with MSX1; the interaction may inhibit MSX1 autoinactivation. Interacts with MSX3. Interacts with ACSS2. In terms of processing, methylation of the KIX domain by CARM1 blocks association with CREB. This results in the blockade of CREB signaling, and in activation of apoptotic response. Phosphorylated by CHUK/IKKA at Ser-1383 and Ser-1387; these phosphorylations promote cell growth by switching the binding preference of CREBBP from TP53 to NF-kappa-B. Post-translationally, sumoylation negatively regulates transcriptional activity via the recruitment of DAAX. In terms of processing, autoacetylation is required for binding to protein substrates, such as acetylated histones and acetylated TP53/p53. Autoacetylation is induced by glucose and fatty acids. Expressed in hypothalamus and cortex.

It is found in the cytoplasm. The protein resides in the nucleus. The catalysed reaction is L-lysyl-[histone] + acetyl-CoA = N(6)-acetyl-L-lysyl-[histone] + CoA + H(+). It carries out the reaction L-lysyl-[protein] + acetyl-CoA = N(6)-acetyl-L-lysyl-[protein] + CoA + H(+). The enzyme catalyses (S)-lactoyl-CoA + L-lysyl-[protein] = N(6)-[(S)-lactoyl]-L-lysyl-[protein] + CoA + H(+). Its function is as follows. Acetylates histones, giving a specific tag for transcriptional activation. Mediates acetylation of histone H3 at 'Lys-18' and 'Lys-27' (H3K18ac and H3K27ac, respectively). Also acetylates non-histone proteins, like DDX21, FBL, IRF2, MAFG, NCOA3, POLR1E/PAF53 and FOXO1. Binds specifically to phosphorylated CREB and enhances its transcriptional activity toward cAMP-responsive genes. Acts as a coactivator of ALX1. Acts as a circadian transcriptional coactivator which enhances the activity of the circadian transcriptional activators: NPAS2-BMAL1 and CLOCK-BMAL1 heterodimers. Acetylates PCNA; acetylation promotes removal of chromatin-bound PCNA and its degradation during nucleotide excision repair (NER). Acetylates POLR1E/PAF53, leading to decreased association of RNA polymerase I with the rDNA promoter region and coding region. Acetylates DDX21, thereby inhibiting DDX21 helicase activity. Acetylates FBL, preventing methylation of 'Gln-105' of histone H2A (H2AQ104me). In addition to protein acetyltransferase, can use different acyl-CoA substrates, such as lactoyl-CoA, and is able to mediate protein lactylation. Catalyzes lactylation of MRE11 in response to DNA damage, thereby promoting DNA double-strand breaks (DSBs) via homologous recombination (HR). Functions as a transcriptional coactivator for SMAD4 in the TGF-beta signaling pathway. The polypeptide is Histone lysine acetyltransferase CREBBP (Crebbp) (Rattus norvegicus (Rat)).